Here is a 155-residue protein sequence, read N- to C-terminus: Secreted RxLR effector protein 38 (155 aa).

The N-terminal stretch at 1–17 (MHLIYIVMAATATTLHA) is a signal peptide. The RxLR-dEER signature appears at 49-64 (RFLRGAYEDVHREEER).

The protein belongs to the RxLR effector family.

It localises to the secreted. The protein localises to the host nucleus. The protein resides in the host cytoplasm. Secreted effector that completely suppresses the host cell death induced by cell death-inducing proteins. This is Secreted RxLR effector protein 38 from Plasmopara viticola (Downy mildew of grapevine).